A 266-amino-acid polypeptide reads, in one-letter code: Undecaprenyl-diphosphatase (266 aa).

Helical transmembrane passes span 1–21, 39–59, 87–107, 111–131, 149–169, 183–203, 218–238, and 246–266; these read METF…FLPI, QGFS…VIYF, WWII…KDFI, LRNT…LWWA, ALLI…RSGA, AAAK…AILV, ALGI…YYFL, and MTPF…LILW.

Belongs to the UppP family.

It localises to the cell inner membrane. It carries out the reaction di-trans,octa-cis-undecaprenyl diphosphate + H2O = di-trans,octa-cis-undecaprenyl phosphate + phosphate + H(+). In terms of biological role, catalyzes the dephosphorylation of undecaprenyl diphosphate (UPP). Confers resistance to bacitracin. This Shewanella denitrificans (strain OS217 / ATCC BAA-1090 / DSM 15013) protein is Undecaprenyl-diphosphatase.